Here is a 174-residue protein sequence, read N- to C-terminus: Large ribosomal subunit protein uL18 (174 aa).

It belongs to the universal ribosomal protein uL18 family. In terms of assembly, part of the 50S ribosomal subunit. Contacts the 5S and 23S rRNAs.

In terms of biological role, this is one of the proteins that bind and probably mediate the attachment of the 5S RNA into the large ribosomal subunit, where it forms part of the central protuberance. The protein is Large ribosomal subunit protein uL18 of Methanoregula boonei (strain DSM 21154 / JCM 14090 / 6A8).